Reading from the N-terminus, the 1321-residue chain is Bile salt export pump (1321 aa).

The Cytoplasmic portion of the chain corresponds to 1–62 (MSDSVILRSI…FSSSTDIWLM (62 aa)). The segment at 16 to 37 (ENDGFESDKSYNNDKKSRLQDE) is disordered. Residues 21–37 (ESDKSYNNDKKSRLQDE) are compositionally biased toward basic and acidic residues. The region spanning 62-385 (MFVGSLCAFL…ASPCLEAFAT (324 aa)) is the ABC transmembrane type-1 1 domain. The helical transmembrane segment at 63–83 (FVGSLCAFLHGIAQPGVLLIF) threads the bilayer. Residues 84–147 (GTMTDVFIDY…MIKFASYYAG (64 aa)) are Extracellular-facing. 4 N-linked (GlcNAc...) asparagine glycosylation sites follow: N109, N116, N122, and N125. A helical membrane pass occupies residues 148–168 (IAVAVLITGYIQICFWVIAAA). Over 169–215 (RQIQKMRKFYFRRIMRMEIGWFDCNSVGELNTRFSDDINKINDAIAD) the chain is Cytoplasmic. The chain crosses the membrane as a helical span at residues 216 to 236 (QMALFIQRMTSTICGFLLGFF). At 237–240 (RGWK) the chain is on the extracellular side. Residues 241–261 (LTLVIISVSPLIGIGAATIGL) form a helical membrane-spanning segment. Residues 262 to 319 (SVSKFTDYELKAYAKAGVVADEVISSMRTVAAFGGEKREVERYEKNLVFAQRWGIRKG) lie on the Cytoplasmic side of the membrane. The chain crosses the membrane as a helical span at residues 320 to 340 (IVMGFFTGFVWCLIFLCYALA). The Extracellular segment spans residues 341–353 (FWYGSTLVLDEGE). Residues 354–374 (YTPGTLVQIFLSVIVGALNLG) form a helical membrane-spanning segment. Topologically, residues 375-755 (NASPCLEAFA…KFSAPEWPYM (381 aa)) are cytoplasmic. The 237-residue stretch at 420–656 (IEFHNVTFHY…KGVYFTLVTL (237 aa)) folds into the ABC transporter 1 domain. 455 to 462 (GPSGAGKS) lines the ATP pocket. A Phosphothreonine modification is found at T586. S587 is modified (phosphoserine). The interaction with HAX1 stretch occupies residues 651–672 (FTLVTLQSQGNQALNEEDIKDA). S690, S701, and S704 each carry phosphoserine. An ABC transmembrane type-1 2 domain is found at 755–1043 (MLVGSVGAAV…AFSYTPSYAK (289 aa)). A helical transmembrane segment spans residues 756-776 (LVGSVGAAVNGTVTPLYAFLF). Residues 777-794 (SQILGTFSIPDKEEQRSQ) lie on the Extracellular side of the membrane. A helical membrane pass occupies residues 795-815 (INGVCLLFVAMGCVSLFTQFL). The Cytoplasmic portion of the chain corresponds to 816 to 869 (QGYAFAKSGELLTKRLRKFGFRAMLGQDIAWFDDLRNSPGALTTRLATDASQVQ). The next 2 membrane-spanning stretches (helical) occupy residues 870 to 890 (GAAG…TVAM) and 891 to 911 (IIAF…FPFL). At 912–979 (ALSGATQTRM…PFKTAIQKAN (68 aa)) the chain is on the cytoplasmic side. The helical transmembrane segment at 980-1000 (IYGFCFAFAQCIMFIANSASY) threads the bilayer. At 1001–1011 (RYGGYLISNEG) the chain is on the extracellular side. A helical transmembrane segment spans residues 1012–1032 (LHFSYVFRVISAVVLSATALG). At 1033 to 1321 (RAFSYTPSYA…KLVTTGSPIS (289 aa)) the chain is on the cytoplasmic side. An ABC transporter 2 domain is found at 1078–1316 (IDFVDCKFTY…KGAYYKLVTT (239 aa)). Residue 1113–1120 (GSSGCGKS) participates in ATP binding. Position 1214 is a phosphoserine (S1214). Residues 1311-1314 (YKLV) form a mediates internalization from the plasma membrane region. Position 1321 is a phosphoserine (S1321).

Belongs to the ABC transporter superfamily. ABCB family. Multidrug resistance exporter (TC 3.A.1.201) subfamily. Interacts with HAX1. Interacts with the adapter protein complex 2 (AP-2) throught AP2A2 or AP2A1; this interaction regulates cell membrane expression of ABCB11 through its internalization in a clathrin-dependent manner and its subsequent degradation. Post-translationally, N-glycosylated. In terms of processing, ubiquitinated; short-chain ubiquitination regulates cell-Surface expression of ABCB11. Expressed predominantly, if not exclusively in the liver, where it was further localized to the canalicular microvilli and to subcanalicular vesicles of the hepatocytes by in situ.

Its subcellular location is the apical cell membrane. It localises to the recycling endosome membrane. It is found in the endosome. The protein localises to the cell membrane. It carries out the reaction cholate(in) + ATP + H2O = cholate(out) + ADP + phosphate + H(+). It catalyses the reaction taurocholate(in) + ATP + H2O = taurocholate(out) + ADP + phosphate + H(+). The enzyme catalyses glycocholate(in) + ATP + H2O = glycocholate(out) + ADP + phosphate + H(+). The catalysed reaction is glycochenodeoxycholate(in) + ATP + H2O = glycochenodeoxycholate(out) + ADP + phosphate + H(+). It carries out the reaction taurochenodeoxycholate(in) + ATP + H2O = taurochenodeoxycholate(out) + ADP + phosphate + H(+). It catalyses the reaction glycoursodeoxycholate(in) + ATP + H2O = glycoursodeoxycholate(out) + ADP + phosphate + H(+). The enzyme catalyses tauroursodeoxycholate(in) + ATP + H2O = tauroursodeoxycholate(out) + ADP + phosphate + H(+). The catalysed reaction is taurodeoxycholate(in) + ATP + H2O = taurodeoxycholate(out) + ADP + phosphate + H(+). It carries out the reaction taurolithocholate 3-sulfate(in) + ATP + H2O = taurolithocholate 3-sulfate(out) + ADP + phosphate + H(+). It catalyses the reaction pravastatin(in) + ATP + H2O = pravastatin(out) + ADP + phosphate + H(+). Its activity is regulated as follows. The uptake of taurocholate is inhibited by taurolithocholate sulfate with an IC(50) of 9 uM. Pravastatin competitively inhibits the transport of taurocholic acid. Cyclosporin A, glibenclamide, rifampicin and troglitazonestrongly competitively inhibit the transport activity of taurocholate. The canalicular transport activity of taurocholate is strongly dependent on canalicular membrane cholesterol content. The uptake of taurocholate is increased by short- and medium-chain fatty acids. Cholesterol increases transport capacity of taurocholate without affecting the affinity for the substrate. In terms of biological role, catalyzes the transport of the major hydrophobic bile salts, such as taurine and glycine-conjugated cholic acid across the canalicular membrane of hepatocytes in an ATP-dependent manner, therefore participates in hepatic bile acid homeostasis and consequently to lipid homeostasis through regulation of biliary lipid secretion in a bile salts dependent manner. Transports taurine-conjugated bile salts more rapidly than glycine-conjugated bile salts. Also transports non-bile acid compounds, such as pravastatin and fexofenadine in an ATP-dependent manner and may be involved in their biliary excretion. The chain is Bile salt export pump from Homo sapiens (Human).